A 312-amino-acid chain; its full sequence is Malate dehydrogenase (312 aa).

Residues 12-17 and D36 contribute to the NAD(+) site; that span reads GAGFTG. 2 residues coordinate substrate: R87 and R93. Residues N100 and 123–125 contribute to the NAD(+) site; that span reads LTN. N125 contacts substrate. S149 bears the Phosphoserine mark. R156 is a binding site for substrate. The Proton acceptor role is filled by H180.

Belongs to the LDH/MDH superfamily. MDH type 3 family.

It catalyses the reaction (S)-malate + NAD(+) = oxaloacetate + NADH + H(+). In terms of biological role, catalyzes the reversible oxidation of malate to oxaloacetate. The chain is Malate dehydrogenase from Bacillus licheniformis (strain ATCC 14580 / DSM 13 / JCM 2505 / CCUG 7422 / NBRC 12200 / NCIMB 9375 / NCTC 10341 / NRRL NRS-1264 / Gibson 46).